Consider the following 85-residue polypeptide: Large ribosomal subunit protein bL27 (85 aa).

This sequence belongs to the bacterial ribosomal protein bL27 family.

The sequence is that of Large ribosomal subunit protein bL27 from Variovorax paradoxus (strain S110).